We begin with the raw amino-acid sequence, 410 residues long: Zinc transporter ttm-1 (410 aa).

2 stretches are compositionally biased toward low complexity: residues 1 to 13 (MTISMISPSSIRL) and 35 to 46 (SVSSSDSGVSAD). The tract at residues 1–94 (MTISMISPSS…GAHKHSHDEK (94 aa)) is disordered. Topologically, residues 1–103 (MTISMISPSS…KYQKGRRAEK (103 aa)) are cytoplasmic. The span at 50–69 (HHHHGHGHGHSHGGHGHSHT) shows a compositional bias: basic residues. The chain crosses the membrane as a helical span at residues 104–124 (VLWAVAALSAVFIAAEFVGGF). At 125-129 (WAQSL) the chain is on the extracellular side. A helical membrane pass occupies residues 130 to 150 (AIMTDAGHMLSDLLSFIISIF). The Cytoplasmic portion of the chain corresponds to 151-171 (AIRCARLPASKRLSFGYERAE). Residues 172–192 (VLGALTSVIILWVLTTVLVVV) traverse the membrane as a helical segment. Residues 193–208 (AIQRIVNNEHEVDADV) are Extracellular-facing. The helical transmembrane segment at 209-229 (MLITAGVGVLFNIVMGLVLHF) threads the bilayer. The Cytoplasmic portion of the chain corresponds to 230–258 (GTGGHGHTHGGHSSHGHAHDGKNVNVRAA). A helical membrane pass occupies residues 259-279 (LIHVIGDLVQSIGVLIAALII). Arginine 280 is a topological domain (extracellular). Residues 281-301 (FTGWTLADPICTFLFSIIVLF) traverse the membrane as a helical segment. Residues 302-410 (TTVTVMRDIF…CDTCQQQETA (109 aa)) lie on the Cytoplasmic side of the membrane.

This sequence belongs to the cation diffusion facilitator (CDF) transporter (TC 2.A.4) family. SLC30A subfamily. In terms of tissue distribution, isoform a: Expressed in the hypodermis and the intestine. Isoform b: Expressed in the intestine, head neurons, seam cells, hypodermis, and the vulva.

It is found in the cytoplasmic vesicle membrane. The protein resides in the apical cell membrane. Functionally, promotes excretion of zinc from intestinal cells into the intestinal lumen in response to increased dietary zinc. Involved in cadmium resistance, possibly by promoting its transport from cells. Involved in resistance to B.thuringiensis pore-forming toxin Cry5B downstream of the sek-1 and pmk-1 MAPK kinase pathway. The sequence is that of Zinc transporter ttm-1 from Caenorhabditis elegans.